A 282-amino-acid polypeptide reads, in one-letter code: Aquaporin PIP2-7 (282 aa).

The disordered stretch occupies residues 1–21 (MSKEVSVEGEQPPVKDYTDPP). Residues 1–38 (MSKEVSVEGEQPPVKDYTDPPPEPLLNFGELRLWSFYR) lie on the Cytoplasmic side of the membrane. Residues 39-59 (ALIAEFVATLLFLYVTIATVI) form a helical membrane-spanning segment. At 60–71 (GHKEQNAADQCS) the chain is on the extracellular side. The chain crosses the membrane as a helical span at residues 72–92 (GVGLLGIAWAFGGMIFILVYC). Residues 93 to 120 (TAGISGGHINPAVTLGLFLARKVSLIRA) are Cytoplasmic-facing. The short motif at 102–104 (NPA) is the NPA 1 element. A helical membrane pass occupies residues 121 to 141 (LLYMVAQCLGAIVGVGIVKGI). The Extracellular segment spans residues 142–162 (MKHQYNSLGGGANVVAAGYSK). The helical transmembrane segment at 163-183 (GTALGAEIIGTFVLVYTVFSA) threads the bilayer. Topologically, residues 184–196 (TDPKRSARDSHVP) are cytoplasmic. A helical transmembrane segment spans residues 197-217 (VLAPLPIGFAVFMVHLATIPI). Residues 218–244 (TGTGINPARSLGAAVIYNQDKPWDDHW) lie on the Extracellular side of the membrane. Positions 223–225 (NPA) match the NPA 2 motif. Residues 245–265 (ILWVGPFVGALAAAAYHQYIL) form a helical membrane-spanning segment. Residues 266–282 (RAAAIKALGSFRSNPSN) are Cytoplasmic-facing.

The protein belongs to the MIP/aquaporin (TC 1.A.8) family. PIP (TC 1.A.8.11) subfamily. As to expression, expressed in roots, leaves and fruits.

It is found in the cell membrane. Its function is as follows. Water channel required to facilitate the transport of water across cell membrane; mercury-insensitive. Contributes to the tolerance to multiple abiotic stresses including salt (NaCl), cold and water deprivation, by modulating cytosolic K(+)/Na(+) ratio, maintaining osmotic balance, and reducing membrane injury (e.g. oxidative injury). Also regulates the expression of abscisic acid (ABA)- biosynthetic and -responsive genes during dehydration and salt stresses. This is Aquaporin PIP2-7 from Musa acuminata (Banana).